The chain runs to 69 residues: Large ribosomal subunit protein bL31 (69 aa).

The protein belongs to the bacterial ribosomal protein bL31 family. Type A subfamily. As to quaternary structure, part of the 50S ribosomal subunit.

Binds the 23S rRNA. The chain is Large ribosomal subunit protein bL31 from Mycoplasmopsis pulmonis (strain UAB CTIP) (Mycoplasma pulmonis).